A 216-amino-acid polypeptide reads, in one-letter code: 3-isopropylmalate dehydratase small subunit (216 aa).

It belongs to the LeuD family. LeuD type 1 subfamily. As to quaternary structure, heterodimer of LeuC and LeuD.

The enzyme catalyses (2R,3S)-3-isopropylmalate = (2S)-2-isopropylmalate. Its pathway is amino-acid biosynthesis; L-leucine biosynthesis; L-leucine from 3-methyl-2-oxobutanoate: step 2/4. Its function is as follows. Catalyzes the isomerization between 2-isopropylmalate and 3-isopropylmalate, via the formation of 2-isopropylmaleate. This Albidiferax ferrireducens (strain ATCC BAA-621 / DSM 15236 / T118) (Rhodoferax ferrireducens) protein is 3-isopropylmalate dehydratase small subunit.